Consider the following 1316-residue polypeptide: DNA-directed RNA polymerase subunit beta' (1316 aa).

Cysteine 60, cysteine 62, cysteine 75, and cysteine 78 together coordinate Zn(2+). Positions 535, 537, and 539 each coordinate Mg(2+). 4 residues coordinate Zn(2+): cysteine 891, cysteine 968, cysteine 975, and cysteine 978.

The protein belongs to the RNA polymerase beta' chain family. The RNAP catalytic core consists of 2 alpha, 1 beta, 1 beta' and 1 omega subunit. When a sigma factor is associated with the core the holoenzyme is formed, which can initiate transcription. Mg(2+) serves as cofactor. It depends on Zn(2+) as a cofactor.

The catalysed reaction is RNA(n) + a ribonucleoside 5'-triphosphate = RNA(n+1) + diphosphate. DNA-dependent RNA polymerase catalyzes the transcription of DNA into RNA using the four ribonucleoside triphosphates as substrates. The chain is DNA-directed RNA polymerase subunit beta' from Mycobacterium bovis (strain BCG / Tokyo 172 / ATCC 35737 / TMC 1019).